A 237-amino-acid chain; its full sequence is N-alpha-acetyltransferase 40 (237 aa).

Gly-2 carries N-myristoyl glycine lipidation. Residues Ser-63 to Arg-216 enclose the N-acetyltransferase domain. Residues Tyr-85, Asp-127–Glu-129, and Tyr-138 contribute to the substrate site. Residues Val-140–Leu-142 and Arg-148–Lys-153 contribute to the acetyl-CoA site. Thr-174 lines the substrate pocket. Residue Asn-179 participates in acetyl-CoA binding. Residues Ser-197 and Tyr-211 each coordinate substrate.

This sequence belongs to the acetyltransferase family. NAA40 subfamily. As to expression, widely expressed; with the highest expression level in liver and the lowest expression in brain (at protein level).

The protein resides in the cytoplasm. It is found in the nucleus. The enzyme catalyses N-terminal L-seryl-[histone H4] + acetyl-CoA = N-terminal N(alpha)-acetyl-L-seryl-[histone H4] + CoA + H(+). The catalysed reaction is N-terminal L-seryl-[histone H2A] + acetyl-CoA = N-terminal N(alpha)-acetyl-L-seryl-[histone H2A] + CoA + H(+). Its function is as follows. N-alpha-acetyltransferase that specifically mediates the acetylation of the N-terminal residues of histones H4 and H2A. In contrast to other N-alpha-acetyltransferase, has a very specific selectivity for histones H4 and H2A N-terminus and specifically recognizes the 'Ser-Gly-Arg-Gly sequence'. Acts as a negative regulator of apoptosis. May play a role in hepatic lipid metabolism. The protein is N-alpha-acetyltransferase 40 of Homo sapiens (Human).